Consider the following 148-residue polypeptide: Large-conductance mechanosensitive channel (148 aa).

The next 2 helical transmembrane spans lie at 14-34 and 85-105; these read VVDMAVGIIIGAAFTTIINTL and GIFVNACISFLIVTFVMFLSV.

This sequence belongs to the MscL family. In terms of assembly, homopentamer.

It is found in the cell inner membrane. Its function is as follows. Channel that opens in response to stretch forces in the membrane lipid bilayer. May participate in the regulation of osmotic pressure changes within the cell. The protein is Large-conductance mechanosensitive channel of Chlorobium phaeobacteroides (strain DSM 266 / SMG 266 / 2430).